The chain runs to 306 residues: UDP-N-acetylenolpyruvoylglucosamine reductase (306 aa).

In terms of domain architecture, FAD-binding PCMH-type spans 25-188 (RVGGPADWLF…IEARFRAEPG (164 aa)). Residue arginine 168 is part of the active site. The segment covering 199–214 (EQLARRDASQPTKDRS) has biased composition (basic and acidic residues). Residues 199–232 (EQLARRDASQPTKDRSAGSTFRNPAGYSSTGRAD) are disordered. Residues 215–229 (AGSTFRNPAGYSSTG) show a composition bias toward polar residues. The Proton donor role is filled by serine 217. The active site involves glutamate 299.

Belongs to the MurB family. FAD is required as a cofactor.

The protein localises to the cytoplasm. The catalysed reaction is UDP-N-acetyl-alpha-D-muramate + NADP(+) = UDP-N-acetyl-3-O-(1-carboxyvinyl)-alpha-D-glucosamine + NADPH + H(+). Its pathway is cell wall biogenesis; peptidoglycan biosynthesis. In terms of biological role, cell wall formation. This is UDP-N-acetylenolpyruvoylglucosamine reductase from Paracoccus denitrificans (strain Pd 1222).